The chain runs to 164 residues: uncharacterized protein (164 aa).

The signal sequence occupies residues 1–25 (MMKTVKHLLCCAIAASALISTGVHA).

This is an uncharacterized protein from Escherichia coli (strain K12).